Here is a 1915-residue protein sequence, read N- to C-terminus: Protein TIC 214 (1915 aa).

The next 6 helical transmembrane spans lie at 18–38, 64–84, 90–110, 126–146, 174–194, and 230–250; these read IINS…FSIG, FITG…HLAL, ITVL…HKYF, LNIQ…HFIL, VGWL…LIWI, and IFSI…PSTL. Disordered regions lie at residues 260-319 and 1566-1631; these read KMKQ…EIRV and NKNI…GSVL. Over residues 267-277 the composition is skewed to acidic residues; that stretch reads SEEETDVEIET. A compositionally biased stretch (basic and acidic residues) spans 279–288; that stretch reads SETKETKEEQ. Residues 304-315 are compositionally biased toward acidic residues; it reads EKEDPDKIDETE. Positions 1587 to 1601 are enriched in basic and acidic residues; that stretch reads KSLELENRNQEEKES. A compositionally biased stretch (polar residues) spans 1602 to 1631; sequence SSQGDLGSNAQNQGNLGPNAQNQGNLGSVL.

The protein belongs to the TIC214 family. Part of the Tic complex.

Its subcellular location is the plastid. It is found in the chloroplast inner membrane. Functionally, involved in protein precursor import into chloroplasts. May be part of an intermediate translocation complex acting as a protein-conducting channel at the inner envelope. In Platanus occidentalis (Sycamore), this protein is Protein TIC 214.